A 77-amino-acid polypeptide reads, in one-letter code: Small ribosomal subunit protein uS17 (77 aa).

It belongs to the universal ribosomal protein uS17 family. Part of the 30S ribosomal subunit.

Its function is as follows. One of the primary rRNA binding proteins, it binds specifically to the 5'-end of 16S ribosomal RNA. This Rickettsia rickettsii (strain Sheila Smith) protein is Small ribosomal subunit protein uS17.